We begin with the raw amino-acid sequence, 366 residues long: BIIDXI-like protein At5g11420 (366 aa).

The first 22 residues, 1–22 (MKGGSLSFLFVLLIATITSVIC), serve as a signal peptide directing secretion. Residues asparagine 98, asparagine 122, and asparagine 209 are each glycosylated (N-linked (GlcNAc...) asparagine).

In terms of assembly, interacts with PME3.

The protein localises to the secreted. It localises to the cell wall. Together with BIIDXI, acts as a positive regulator of PME3 activity during several developmental processes, including seed germination and endosperm (testa) rupture at the micropyle, probably by modulating the pectin status in cell walls. The polypeptide is BIIDXI-like protein At5g11420 (Arabidopsis thaliana (Mouse-ear cress)).